Here is a 147-residue protein sequence, read N- to C-terminus: Leech anti-platelet protein (147 aa).

The first 21 residues, 1–21, serve as a signal peptide directing secretion; it reads MNSFLFSLACSLLVAIPAISA. The interval 21 to 71 is disordered; the sequence is AQDEDAGGAGDETSEGEDTTGSDETPSTGGGGDGGNEETITAGNEDCWSKR. Positions 22-41 are enriched in acidic residues; that stretch reads QDEDAGGAGDETSEGEDTTG. 3 disulfide bridges follow: Cys-67-Cys-145, Cys-92-Cys-117, and Cys-96-Cys-105.

The N-terminus is blocked. As to expression, expressed by salivary glands.

The protein localises to the secreted. Its function is as follows. Inhibits collagen-stimulated platelet aggregation (IC(50)=60 nM), dense granule release and serotonin release. Does not inhibit platelet aggregation induced by ADP, arachidonic acid, and thrombin. In Haementeria officinalis (Mexican leech), this protein is Leech anti-platelet protein.